Consider the following 172-residue polypeptide: Shikimate kinase (172 aa).

Residue 11 to 16 (GAGKST) participates in ATP binding. A Mg(2+)-binding site is contributed by serine 15. Residues aspartate 33, arginine 57, and glycine 79 each coordinate substrate. Residue arginine 117 coordinates ATP. Arginine 136 contacts substrate. Position 153 (arginine 153) interacts with ATP.

This sequence belongs to the shikimate kinase family. In terms of assembly, monomer. Mg(2+) is required as a cofactor.

The protein resides in the cytoplasm. The enzyme catalyses shikimate + ATP = 3-phosphoshikimate + ADP + H(+). The protein operates within metabolic intermediate biosynthesis; chorismate biosynthesis; chorismate from D-erythrose 4-phosphate and phosphoenolpyruvate: step 5/7. Functionally, catalyzes the specific phosphorylation of the 3-hydroxyl group of shikimic acid using ATP as a cosubstrate. This is Shikimate kinase from Pseudomonas syringae pv. syringae (strain B728a).